The primary structure comprises 271 residues: MPELPEVETALRGISPYLKNFTIEKVVVRQPKLRWAVSEELITLKNVKIVDLTRRAKYLIIHTEKGYIIGHLGMSGSVRIVPQNSAIDKHDHIDIVMNNGKLLRYNDPRRFGAWLWTENLDDFHLFLKLGPEPLSDEFNAEYLFKKSRQKSTALKTFLMDNAVVVGVGNIYANESLFICGIHPLKLAKNLTLNQCFSLVNTIKDVLRKAIIQGGTTLKDFLQPDGRPGYFAQELLVYGNKDKPCPKCGGKIESLIIGQRNSFFCPKCQKRG.

Proline 2 serves as the catalytic Schiff-base intermediate with DNA. Glutamate 3 (proton donor) is an active-site residue. Lysine 57 acts as the Proton donor; for beta-elimination activity in catalysis. Histidine 90, arginine 109, and lysine 150 together coordinate DNA. The FPG-type zinc-finger motif lies at 235–269 (LVYGNKDKPCPKCGGKIESLIIGQRNSFFCPKCQK). Arginine 259 acts as the Proton donor; for delta-elimination activity in catalysis.

It belongs to the FPG family. In terms of assembly, monomer. The cofactor is Zn(2+).

The catalysed reaction is Hydrolysis of DNA containing ring-opened 7-methylguanine residues, releasing 2,6-diamino-4-hydroxy-5-(N-methyl)formamidopyrimidine.. It carries out the reaction 2'-deoxyribonucleotide-(2'-deoxyribose 5'-phosphate)-2'-deoxyribonucleotide-DNA = a 3'-end 2'-deoxyribonucleotide-(2,3-dehydro-2,3-deoxyribose 5'-phosphate)-DNA + a 5'-end 5'-phospho-2'-deoxyribonucleoside-DNA + H(+). Functionally, involved in base excision repair of DNA damaged by oxidation or by mutagenic agents. Acts as a DNA glycosylase that recognizes and removes damaged bases. Has a preference for oxidized purines, such as 7,8-dihydro-8-oxoguanine (8-oxoG). Has AP (apurinic/apyrimidinic) lyase activity and introduces nicks in the DNA strand. Cleaves the DNA backbone by beta-delta elimination to generate a single-strand break at the site of the removed base with both 3'- and 5'-phosphates. This is Formamidopyrimidine-DNA glycosylase from Haemophilus influenzae (strain PittEE).